The chain runs to 469 residues: Protein DETOXIFICATION 18 (469 aa).

12 helical membrane-spanning segments follow: residues 40–60 (LPMI…VMFA), 73–93 (LANS…SGAL), 121–141 (LVFT…FLLL), 152–172 (ALYM…QNIL), 183–203 (PLVL…YALV), 206–226 (AGLG…IAFV), 252–274 (HVVL…YWAF), 293–313 (LVAI…GLSA), 344–364 (VLAL…VGLF), 374–394 (FASL…QGVL), 406–426 (LATV…SVLC), and 438–458 (WIGL…MTIF).

Belongs to the multi antimicrobial extrusion (MATE) (TC 2.A.66.1) family.

Its subcellular location is the membrane. This is Protein DETOXIFICATION 18 from Arabidopsis thaliana (Mouse-ear cress).